The primary structure comprises 535 residues: Probable acyl-activating enzyme 22 (535 aa).

The protein belongs to the ATP-dependent AMP-binding enzyme family.

Its function is as follows. May act as an acid--thiol ligase that activates carboxylic acids by forming acyl-CoAs. In Arabidopsis thaliana (Mouse-ear cress), this protein is Probable acyl-activating enzyme 22 (AEE22).